The primary structure comprises 324 residues: Lignin-forming anionic peroxidase (324 aa).

The N-terminal stretch at M1 to A22 is a signal peptide. Pyrrolidone carboxylic acid is present on Q23. 4 disulfides stabilise this stretch: C33/C111, C66/C71, C117/C320, and C196/C228. Residue N35 is glycosylated (N-linked (GlcNAc...) asparagine). H64 serves as the catalytic Proton acceptor. Residues D65, V68, G70, D72, and S74 each coordinate Ca(2+). A glycan (N-linked (GlcNAc...) asparagine) is linked at N150. P159 contacts substrate. Position 189 (H189) interacts with heme b. Ca(2+) is bound at residue T190. N207 carries N-linked (GlcNAc...) asparagine glycosylation. Positions 242, 245, and 250 each coordinate Ca(2+).

The protein belongs to the peroxidase family. Classical plant (class III) peroxidase subfamily. The cofactor is Ca(2+). Heme b is required as a cofactor.

It is found in the secreted. It catalyses the reaction 2 a phenolic donor + H2O2 = 2 a phenolic radical donor + 2 H2O. Its function is as follows. Removal of H(2)O(2), oxidation of toxic reductants, biosynthesis and degradation of lignin, suberization, auxin catabolism, response to environmental stresses such as wounding, pathogen attack and oxidative stress. These functions might be dependent on each isozyme/isoform in each plant tissue. In terms of biological role, plays an integral role in secondary cell wall biosynthesis by the polymerization of cinnamyl alcohols into lignin and by forming rigid cross-links between cellulose, pectin, hydroxy-proline-rich glycoproteins, and lignin. This is Lignin-forming anionic peroxidase from Nicotiana tabacum (Common tobacco).